The primary structure comprises 199 residues: 5'-deoxynucleotidase YfbR (199 aa).

Residues 18-19 and histidine 33 each bind substrate; that span reads RW. Residues 30 to 142 form the HD domain; that stretch reads VSEHSLQVAM…VKQADALCAY (113 aa). Histidine 33, histidine 68, and aspartate 69 together coordinate a divalent metal cation. Residues aspartate 69, 77 to 80, and aspartate 137 each bind substrate; that span reads DLPT. Aspartate 137 contacts a divalent metal cation.

The protein belongs to the 5DNU family. In terms of assembly, homodimer. The cofactor is a divalent metal cation.

Its subcellular location is the cytoplasm. It catalyses the reaction a 2'-deoxyribonucleoside 5'-phosphate + H2O = a 2'-deoxyribonucleoside + phosphate. Its function is as follows. Catalyzes the strictly specific dephosphorylation of 2'-deoxyribonucleoside 5'-monophosphates. The protein is 5'-deoxynucleotidase YfbR of Salmonella agona (strain SL483).